A 565-amino-acid chain; its full sequence is Proline--tRNA ligase (565 aa).

This sequence belongs to the class-II aminoacyl-tRNA synthetase family. ProS type 1 subfamily. Homodimer.

It localises to the cytoplasm. It carries out the reaction tRNA(Pro) + L-proline + ATP = L-prolyl-tRNA(Pro) + AMP + diphosphate. Functionally, catalyzes the attachment of proline to tRNA(Pro) in a two-step reaction: proline is first activated by ATP to form Pro-AMP and then transferred to the acceptor end of tRNA(Pro). As ProRS can inadvertently accommodate and process non-cognate amino acids such as alanine and cysteine, to avoid such errors it has two additional distinct editing activities against alanine. One activity is designated as 'pretransfer' editing and involves the tRNA(Pro)-independent hydrolysis of activated Ala-AMP. The other activity is designated 'posttransfer' editing and involves deacylation of mischarged Ala-tRNA(Pro). The misacylated Cys-tRNA(Pro) is not edited by ProRS. This is Proline--tRNA ligase from Francisella tularensis subsp. tularensis (strain WY96-3418).